The primary structure comprises 489 residues: Virion host shutoff protein (489 aa).

4 disordered regions span residues 110–135 (EEAS…AFSN), 142–161 (SLAS…PSAA), 285–316 (RSQT…GGTE), and 333–363 (YEDD…ILTP). Residues 124 to 134 (ITDSRPSSAFS) show a composition bias toward polar residues.

It belongs to the herpesviridae VHS protein family. In terms of assembly, interacts with human EIF4H, EIF4A1 and EIF4A2; interaction with eIF4AI and EIF4A2 presumably allows Vhs protein to associate with the eIF4F cap-binding complex.

Its subcellular location is the virion. Minor structural protein that acts as an endoribonuclease during lytic infection. Degrades host mRNAs in the cytoplasm by cutting them at preferred sites, including some in regions of translation initiation. Together with inhibition of host splicing by ICP27, contributes to an overall decrease in host protein synthesis. Also, after the onset of viral transcription, accelerates the turnover of viral mRNA, thereby facilitating the sequential expression of different classes of viral genes. Binds translation initiation factors eIF4H, eIF4AI, and eIF4AII, thereby may interact directly with the translation initiation complex and thus digest specifically mRNAs. Also impedes antigen presentation by major histocompatibility complex class I and class II molecules, inhibits secretion of cytokines that would otherwise recruit lymphocytes and neutrophils cells to the site of infection and blocks the activation of dendritic cells. Impedes the alpha/beta interferon-mediated response to infection by evading the cGAS/ STING-mediated DNA-sensing pathway and degrading CGAS via its RNase activity. The chain is Virion host shutoff protein (UL41) from Human herpesvirus 1 (strain KOS) (HHV-1).